Consider the following 216-residue polypeptide: Heart- and neural crest derivatives-expressed protein 2 (216 aa).

The segment at Met74–Asn115 is disordered. Residues Val82 to Gly93 are compositionally biased toward gly residues. Over residues Pro96–Thr111 the composition is skewed to basic residues. One can recognise a bHLH domain in the interval Lys98–Leu150.

Efficient DNA binding requires dimerization with another bHLH protein.

It localises to the nucleus. In terms of biological role, essential for cardiac morphogenesis. Binds DNA on E-box consensus sequence 5'-CANNTG-3'. Plays an important role in limb development, particularly in the establishment of anterior-posterior polarization of the limb bud. The chain is Heart- and neural crest derivatives-expressed protein 2 (HAND2) from Gallus gallus (Chicken).